A 920-amino-acid polypeptide reads, in one-letter code: Isoleucine--tRNA ligase (920 aa).

The 'HIGH' region motif lies at 57-67 (PYANGDIHLGH). Glutamate 560 is a binding site for L-isoleucyl-5'-AMP. The short motif at 601–605 (KMSKS) is the 'KMSKS' region element. Lysine 604 lines the ATP pocket. Zn(2+)-binding residues include cysteine 890, cysteine 893, cysteine 910, and cysteine 913.

The protein belongs to the class-I aminoacyl-tRNA synthetase family. IleS type 1 subfamily. Monomer. Requires Zn(2+) as cofactor.

It is found in the cytoplasm. The catalysed reaction is tRNA(Ile) + L-isoleucine + ATP = L-isoleucyl-tRNA(Ile) + AMP + diphosphate. Its function is as follows. Catalyzes the attachment of isoleucine to tRNA(Ile). As IleRS can inadvertently accommodate and process structurally similar amino acids such as valine, to avoid such errors it has two additional distinct tRNA(Ile)-dependent editing activities. One activity is designated as 'pretransfer' editing and involves the hydrolysis of activated Val-AMP. The other activity is designated 'posttransfer' editing and involves deacylation of mischarged Val-tRNA(Ile). In Caldicellulosiruptor saccharolyticus (strain ATCC 43494 / DSM 8903 / Tp8T 6331), this protein is Isoleucine--tRNA ligase.